Consider the following 70-residue polypeptide: Cold shock-like protein CspG (70 aa).

Positions 7 to 67 (GLVKWFNADK…GQRGPAAANV (61 aa)) constitute a CSD domain.

The protein localises to the cytoplasm. The polypeptide is Cold shock-like protein CspG (cspG) (Escherichia coli O157:H7).